The following is a 290-amino-acid chain: Malonyl-[acyl-carrier protein] O-methyltransferase (290 aa).

The protein belongs to the methyltransferase superfamily.

The enzyme catalyses malonyl-[ACP] + S-adenosyl-L-methionine = malonyl-[ACP] methyl ester + S-adenosyl-L-homocysteine. It participates in cofactor biosynthesis; biotin biosynthesis. In terms of biological role, converts the free carboxyl group of a malonyl-thioester to its methyl ester by transfer of a methyl group from S-adenosyl-L-methionine (SAM). It allows to synthesize pimeloyl-ACP via the fatty acid synthetic pathway. In Gallionella capsiferriformans (strain ES-2) (Gallionella ferruginea capsiferriformans (strain ES-2)), this protein is Malonyl-[acyl-carrier protein] O-methyltransferase.